The primary structure comprises 178 residues: Large ribosomal subunit protein uL5 (178 aa).

The protein belongs to the universal ribosomal protein uL5 family. In terms of assembly, part of the 50S ribosomal subunit; part of the 5S rRNA/L5/L18/L25 subcomplex. Contacts the 5S rRNA and the P site tRNA. Forms a bridge to the 30S subunit in the 70S ribosome.

In terms of biological role, this is one of the proteins that bind and probably mediate the attachment of the 5S RNA into the large ribosomal subunit, where it forms part of the central protuberance. In the 70S ribosome it contacts protein S13 of the 30S subunit (bridge B1b), connecting the 2 subunits; this bridge is implicated in subunit movement. Contacts the P site tRNA; the 5S rRNA and some of its associated proteins might help stabilize positioning of ribosome-bound tRNAs. The chain is Large ribosomal subunit protein uL5 from Psychrobacter sp. (strain PRwf-1).